Consider the following 930-residue polypeptide: Isoleucine--tRNA ligase (930 aa).

Positions 57 to 67 (PYANGNIHVGH) match the 'HIGH' region motif. Position 554 (E554) interacts with L-isoleucyl-5'-AMP. The short motif at 595-599 (KMSKS) is the 'KMSKS' region element. K598 provides a ligand contact to ATP. Zn(2+)-binding residues include C888, C891, C908, and C911.

It belongs to the class-I aminoacyl-tRNA synthetase family. IleS type 1 subfamily. Monomer. It depends on Zn(2+) as a cofactor.

It is found in the cytoplasm. The catalysed reaction is tRNA(Ile) + L-isoleucine + ATP = L-isoleucyl-tRNA(Ile) + AMP + diphosphate. Catalyzes the attachment of isoleucine to tRNA(Ile). As IleRS can inadvertently accommodate and process structurally similar amino acids such as valine, to avoid such errors it has two additional distinct tRNA(Ile)-dependent editing activities. One activity is designated as 'pretransfer' editing and involves the hydrolysis of activated Val-AMP. The other activity is designated 'posttransfer' editing and involves deacylation of mischarged Val-tRNA(Ile). In Streptococcus pneumoniae (strain Taiwan19F-14), this protein is Isoleucine--tRNA ligase.